We begin with the raw amino-acid sequence, 148 residues long: Lysozyme C (148 aa).

A signal peptide spans 1–18; that stretch reads MKALIVLGLVLLSVTVQG. A C-type lysozyme domain is found at 19–148; the sequence is KVFERCELAR…VRQYVQGCGV (130 aa). 4 disulfide bridges follow: C24-C146, C48-C134, C83-C99, and C95-C113. Residues E53 and D71 contribute to the active site.

The protein belongs to the glycosyl hydrolase 22 family. In terms of assembly, monomer.

It is found in the secreted. It catalyses the reaction Hydrolysis of (1-&gt;4)-beta-linkages between N-acetylmuramic acid and N-acetyl-D-glucosamine residues in a peptidoglycan and between N-acetyl-D-glucosamine residues in chitodextrins.. In terms of biological role, lysozymes have primarily a bacteriolytic function; those in tissues and body fluids are associated with the monocyte-macrophage system and enhance the activity of immunoagents. This is Lysozyme C (LYZ) from Homo sapiens (Human).